The sequence spans 230 residues: MKGILGKKVGMSQLFTTEGIAISVSIIEVPENIVTKIITKEKNSYNAIQLAAFDKKQSRFLKPEIGHFAKANTKPKRFIKEFRDFQGYKLGQTVDVSIFSPGEFVDVTGTSKGKGFAGTIKRYNQAIGPRSHGGGGGSKPIRQTGSLGDISGNKVVKGMTMPGRLGHEKVTKQSLEIIKVDKENNLLVLKGSVPGPKKSFLVIKSAIKKPNPKNPVSLFVPNSDKEVKNE.

Disordered stretches follow at residues 125–149 (QAIG…SLGD) and 210–230 (PNPK…VKNE).

Belongs to the universal ribosomal protein uL3 family. As to quaternary structure, part of the 50S ribosomal subunit. Forms a cluster with proteins L14 and L19.

In terms of biological role, one of the primary rRNA binding proteins, it binds directly near the 3'-end of the 23S rRNA, where it nucleates assembly of the 50S subunit. This is Large ribosomal subunit protein uL3 from Mesomycoplasma hyopneumoniae (strain 232) (Mycoplasma hyopneumoniae).